A 308-amino-acid polypeptide reads, in one-letter code: Glutaminase 2 (308 aa).

The substrate site is built by Ser-66, Asn-117, Glu-161, Asn-168, Tyr-192, Tyr-244, and Val-262.

It belongs to the glutaminase family. In terms of assembly, homotetramer.

The catalysed reaction is L-glutamine + H2O = L-glutamate + NH4(+). This chain is Glutaminase 2, found in Escherichia coli O157:H7.